The sequence spans 256 residues: Undecaprenyl-diphosphatase (256 aa).

7 helical membrane-spanning segments follow: residues 1–21 (MDIF…FLPV), 41–61 (FHKT…LALF), 69–89 (VDIW…GFLL), 96–116 (LFAP…FLVL), 172–192 (VAAE…TGYD), 207–227 (ALGV…KGFL), and 233–253 (FNFV…LFYL).

The protein belongs to the UppP family.

The protein localises to the cell inner membrane. It catalyses the reaction di-trans,octa-cis-undecaprenyl diphosphate + H2O = di-trans,octa-cis-undecaprenyl phosphate + phosphate + H(+). Catalyzes the dephosphorylation of undecaprenyl diphosphate (UPP). Confers resistance to bacitracin. The sequence is that of Undecaprenyl-diphosphatase from Wolinella succinogenes (strain ATCC 29543 / DSM 1740 / CCUG 13145 / JCM 31913 / LMG 7466 / NCTC 11488 / FDC 602W) (Vibrio succinogenes).